The following is a 501-amino-acid chain: Solute carrier family 2, facilitated glucose transporter member 5 (501 aa).

Position 1 is an N-acetylmethionine (Met-1). The Cytoplasmic portion of the chain corresponds to Met-1–Ala-18. Residues Leu-19 to Val-39 form a helical membrane-spanning segment. Tyr-32 serves as a coordination point for D-fructose. Over Asn-40 to Thr-68 the chain is Extracellular. Asn-51 carries N-linked (GlcNAc...) asparagine glycosylation. The helical transmembrane segment at Leu-69 to Pro-91 threads the bilayer. Over Leu-92 to Arg-98 the chain is Cytoplasmic. Residues Lys-99–Ser-119 form a helical membrane-spanning segment. Topologically, residues Arg-120–Glu-126 are extracellular. A helical membrane pass occupies residues Leu-127–Tyr-149. The Cytoplasmic segment spans residues Leu-150 to Ala-161. A helical transmembrane segment spans residues Leu-162–Leu-182. Gln-167 provides a ligand contact to D-fructose. At Arg-183–Trp-192 the chain is on the extracellular side. A helical transmembrane segment spans residues Pro-193–Phe-213. Topologically, residues Pro-214 to Gln-277 are cytoplasmic. A helical transmembrane segment spans residues Leu-278–Tyr-298. Residues Gln-288 and Ile-296 to Tyr-298 each bind D-fructose. Topologically, residues Tyr-299–His-313 are extracellular. The chain crosses the membrane as a helical span at residues Val-314 to Phe-334. Over Val-335 to Arg-342 the chain is Cytoplasmic. Residues Leu-343 to Leu-363 form a helical membrane-spanning segment. Over Ala-364–Trp-371 the chain is Extracellular. The chain crosses the membrane as a helical span at residues Met-372–Ile-394. His-387 contacts D-fructose. At Pro-395 to Phe-412 the chain is on the cytoplasmic side. A helical transmembrane segment spans residues Met-413 to Ile-433. D-fructose is bound at residue His-419 to Trp-420. Topologically, residues Gln-434 to Pro-439 are extracellular. The chain crosses the membrane as a helical span at residues Tyr-440–Val-460. Residues Pro-461–Gln-501 lie on the Cytoplasmic side of the membrane.

The protein belongs to the major facilitator superfamily. Sugar transporter (TC 2.A.1.1) family. Glucose transporter subfamily.

It localises to the apical cell membrane. The protein localises to the cell membrane. The protein resides in the sarcolemma. It carries out the reaction D-fructose(out) = D-fructose(in). Its function is as follows. Functions as a fructose transporter that has only low activity with other monosaccharides. Can mediate the uptake of deoxyglucose, but with low efficiency. Essential for fructose uptake in the small intestine. Plays a role in the regulation of salt uptake and blood pressure in response to dietary fructose. Required for the development of high blood pressure in response to high dietary fructose intake. The protein is Solute carrier family 2, facilitated glucose transporter member 5 of Pongo abelii (Sumatran orangutan).